The following is a 75-amino-acid chain: Transcription attenuation protein MtrB (75 aa).

The protein belongs to the MtrB family. As to quaternary structure, oligomer of 11 identical subunits arranged in doughnut-like structure.

Functionally, required for transcription attenuation control in the trp operon. This trans-acting factor binds to trinucleotide repeats (GAG or UAG) located in the trp leader transcript causing transcription termination. Binds the leader RNA only in presence of L-tryptophan. This is Transcription attenuation protein MtrB (mtrB) from Bacillus subtilis (strain 168).